A 214-amino-acid chain; its full sequence is Adenylate kinase (214 aa).

10–15 is an ATP binding site; it reads GAGKGT. The segment at 30–59 is NMP; it reads STGDMLRAAVKAQSELGRQAKALMDAGKLV. Residues Thr-31, Arg-36, 57–59, 85–88, and Gln-92 contribute to the AMP site; these read KLV and GFPR. Residues 122 to 159 are LID; the sequence is GRRVHAPSGRVYHVKFNPPKQEGKDDVTGELLTSRKDD. Residues Arg-123 and 132–133 each bind ATP; that span reads VY. The AMP site is built by Arg-156 and Arg-167. Arg-200 lines the ATP pocket.

Belongs to the adenylate kinase family. In terms of assembly, monomer.

Its subcellular location is the cytoplasm. It catalyses the reaction AMP + ATP = 2 ADP. Its pathway is purine metabolism; AMP biosynthesis via salvage pathway; AMP from ADP: step 1/1. In terms of biological role, catalyzes the reversible transfer of the terminal phosphate group between ATP and AMP. Plays an important role in cellular energy homeostasis and in adenine nucleotide metabolism. This chain is Adenylate kinase, found in Sodalis glossinidius (strain morsitans).